Here is a 307-residue protein sequence, read N- to C-terminus: tRNA dimethylallyltransferase 1 (307 aa).

Residue 10–17 (GPTASGKT) participates in ATP binding. 12–17 (TASGKT) contributes to the substrate binding site. The tract at residues 35-38 (DSRQ) is interaction with substrate tRNA.

It belongs to the IPP transferase family. Monomer. The cofactor is Mg(2+).

It catalyses the reaction adenosine(37) in tRNA + dimethylallyl diphosphate = N(6)-dimethylallyladenosine(37) in tRNA + diphosphate. Its function is as follows. Catalyzes the transfer of a dimethylallyl group onto the adenine at position 37 in tRNAs that read codons beginning with uridine, leading to the formation of N6-(dimethylallyl)adenosine (i(6)A). This chain is tRNA dimethylallyltransferase 1, found in Geotalea daltonii (strain DSM 22248 / JCM 15807 / FRC-32) (Geobacter daltonii).